The primary structure comprises 419 residues: eIF5-mimic protein 1 (419 aa).

Residues 1–22 (MNKHQKPVLTGQRFKTRKRDEK) are disordered. K117 is modified (N6-acetyllysine). A W2 domain is found at 248–415 (VQQSLGTRKE…QNAEEESESE (168 aa)). Residues S412 and S414 each carry the phosphoserine modification.

The protein belongs to the BZW family. In terms of assembly, interacts with EIF3E. Interacts with EIF2S2. Interacts with EIF3C.

The protein resides in the cytoplasm. Functionally, translation initiation regulator which represses non-AUG initiated translation and repeat-associated non-AUG (RAN) initiated translation by acting as a competitive inhibitor of eukaryotic translation initiation factor 5 (EIF5) function. Increases the accuracy of translation initiation by impeding EIF5-dependent translation from non-AUG codons by competing with it for interaction with EIF2S2 within the 43S pre-initiation complex (PIC) in an EIF3C-binding dependent manner. The chain is eIF5-mimic protein 1 (BZW2) from Homo sapiens (Human).